Consider the following 503-residue polypeptide: SusD-like protein P38 (503 aa).

A signal peptide spans 1 to 21 (MKKFKNISITFLILISLGVLN).

The protein belongs to the SusD family.

It is found in the cell outer membrane. In terms of biological role, polysaccharide-binding protein probably involved in ulvan degradation. Ulvan is the main polysaccharide component of the Ulvales (green seaweed) cell wall. It is composed of disaccharide building blocks comprising 3-sulfated rhamnose (Rha3S) linked to D-glucuronic acid (GlcA), L-iduronic acid (IduA), or D-xylose (Xyl). The SusD-like protein may mediate ulvan oligomer-binding before transport in the periplasm for further degradation. This is SusD-like protein P38 from Formosa agariphila (strain DSM 15362 / KCTC 12365 / LMG 23005 / KMM 3901 / M-2Alg 35-1).